The chain runs to 278 residues: F-box only protein 17 (278 aa).

In terms of domain architecture, F-box spans 15-62 (SLALDALPPELLVQVLSHVPPRSLVTRCRPVCRAWRDIVDGPTVWLLQ). The 177-residue stretch at 99-275 (YCLRAPFGRN…VTHSSVRVRI (177 aa)) folds into the FBA domain.

As to quaternary structure, part of a SCF (SKP1-cullin-F-box) protein ligase complex. Interacts with SKP1 and CUL1. In terms of tissue distribution, expressed in heart, skeletal muscle, liver and kidney. Expressed at lower levels in spleen and brain.

In terms of biological role, substrate-recognition component of the SCF (SKP1-CUL1-F-box protein)-type E3 ubiquitin ligase complex. Able to recognize and bind denatured glycoproteins, which are modified with complex-type oligosaccharides. Also recognizes sulfated glycans. Does not bind high-mannose glycoproteins. In Homo sapiens (Human), this protein is F-box only protein 17 (FBXO17).